The following is a 971-amino-acid chain: Translation initiation factor IF-2 (971 aa).

Positions 49–63 are enriched in basic and acidic residues; it reads HLRKSHGATDGDKRK. Disordered regions lie at residues 49 to 85 and 99 to 386; these read HLRKSHGATDGDKRKITLTRKHTSEIKQSDATGKART and RDDV…PTEP. Residues 105-114 show a composition bias toward low complexity; sequence GAEQGQAQVA. Positions 121-181 are enriched in basic and acidic residues; sequence ELKRREEEAR…EEEAAAKRAA (61 aa). Over residues 182-200 the composition is skewed to low complexity; the sequence is AEAAAAQQAAAQQAAAEQE. Positions 209-260 are enriched in basic and acidic residues; it reads DEARAAAERAAQREAAKKAEDAAREAADKARAEQEEISKRRAAAEAEARAIR. Residues 303-325 show a composition bias toward low complexity; that stretch reads ARPAVKKPAGAAAPATTQAPAGA. Positions 355 to 368 are enriched in gly residues; the sequence is SSGGVDRGWRGGPK. One can recognise a tr-type G domain in the interval 471 to 640; sequence PRPPVVTVMG…LLQAEVLELK (170 aa). Residues 480–487 form a G1 region; it reads GHVDHGKT. 480–487 provides a ligand contact to GTP; the sequence is GHVDHGKT. The interval 505-509 is G2; it reads GITQH. The G3 stretch occupies residues 526 to 529; it reads DTPG. GTP-binding positions include 526–530 and 580–583; these read DTPGH and NKID. A G4 region spans residues 580–583; sequence NKID. Residues 616-618 form a G5 region; sequence SAK.

The protein belongs to the TRAFAC class translation factor GTPase superfamily. Classic translation factor GTPase family. IF-2 subfamily.

It localises to the cytoplasm. Its function is as follows. One of the essential components for the initiation of protein synthesis. Protects formylmethionyl-tRNA from spontaneous hydrolysis and promotes its binding to the 30S ribosomal subunits. Also involved in the hydrolysis of GTP during the formation of the 70S ribosomal complex. The sequence is that of Translation initiation factor IF-2 from Burkholderia cenocepacia (strain ATCC BAA-245 / DSM 16553 / LMG 16656 / NCTC 13227 / J2315 / CF5610) (Burkholderia cepacia (strain J2315)).